The primary structure comprises 138 residues: MRTLWIMAVLLVGVEGSLVQFETLIMKIAGRSGVWYYGSYGCYCGSGGQGRPQDASDRCCFVHDCCYGKVTDCDPKADVYTYSEENGVVVCGGDDPCKKQICECDRVAATCFRDNKDTYDNKYWFFPAKNCQEESEPC.

An N-terminal signal peptide occupies residues 1-16 (MRTLWIMAVLLVGVEG). 7 cysteine pairs are disulfide-bonded: Cys42/Cys131, Cys44/Cys60, Cys59/Cys111, Cys65/Cys138, Cys66/Cys104, Cys73/Cys97, and Cys91/Cys102. Ca(2+) is bound by residues Tyr43, Gly45, and Gly47. His63 is an active-site residue. Residue Asp64 coordinates Ca(2+). Asp105 is a catalytic residue.

Belongs to the phospholipase A2 family. Group II subfamily. D49 sub-subfamily. The cofactor is Ca(2+). In terms of tissue distribution, expressed by the venom gland.

The protein resides in the secreted. It catalyses the reaction a 1,2-diacyl-sn-glycero-3-phosphocholine + H2O = a 1-acyl-sn-glycero-3-phosphocholine + a fatty acid + H(+). In terms of biological role, snake venom phospholipase A2 that shows a potent inhibition of human platelet aggregation. This inhibition is concentration-dependent when aggregation is induced by collagen, and concentration-independent when aggregation is induced by arachidonic acid. In human umbilical-cord vein endothelial cells, this toxin stimulates endothelial cells to release prostaglandin I(2), suggesting an increase of its potential anti-platelet activity in vivo. PLA2 catalyzes the calcium-dependent hydrolysis of the 2-acyl groups in 3-sn-phosphoglycerides. This Bothrops erythromelas (Caatinga lance head) protein is Acidic phospholipase A2 BE-I-PLA2.